A 337-amino-acid polypeptide reads, in one-letter code: Cysteine synthase 3 (337 aa).

The residue at position 47 (Lys47) is an N6-(pyridoxal phosphate)lysine. Residues Asn78, 182-186 (GSSGT), and Ser270 each bind pyridoxal 5'-phosphate.

The protein belongs to the cysteine synthase/cystathionine beta-synthase family. In terms of assembly, homodimer. Requires pyridoxal 5'-phosphate as cofactor.

It carries out the reaction O-acetyl-L-serine + hydrogen sulfide = L-cysteine + acetate. Its pathway is amino-acid biosynthesis; L-cysteine biosynthesis; L-cysteine from L-serine: step 2/2. Its function is as follows. Primarily catalyzes the formation of cysteine and acetate from O-acetylserine and hydrogen sulfide. Can also catalyze the formation of cysteine and acetate from S-sulfocysteine and hydrogen sulfide and the formation of cyanoalanine and hydrogen sulfide from either S-sulfocysteine or O-acetylserine and hydrogen cyanide. This is Cysteine synthase 3 from Caenorhabditis elegans.